The sequence spans 719 residues: uncharacterized protein (719 aa).

Residues 64 to 100 are a coiled coil; it reads IQNLNQRKEEVIRLIAEQDKLTDNLKRKIEQSVKLQE. One can recognise an S1 motif domain in the interval 649 to 718; the sequence is GMELQGTVRN…QKGRVSLSMV (70 aa).

This is an uncharacterized protein from Bacillus subtilis (strain 168).